We begin with the raw amino-acid sequence, 65 residues long: Large ribosomal subunit protein bL35 (65 aa).

Belongs to the bacterial ribosomal protein bL35 family.

This is Large ribosomal subunit protein bL35 from Buchnera aphidicola subsp. Cinara cedri (strain Cc).